The primary structure comprises 209 residues: Thymidine kinase (209 aa).

ATP-binding positions include 25-32 and 103-106; these read GCMFAGKT and DEVQ. Glutamate 104 acts as the Proton acceptor in catalysis. Positions 160, 163, 198, and 201 each coordinate Zn(2+).

This sequence belongs to the thymidine kinase family. Homotetramer.

It is found in the cytoplasm. It carries out the reaction thymidine + ATP = dTMP + ADP + H(+). The protein is Thymidine kinase of Mycoplasma capricolum subsp. capricolum (strain California kid / ATCC 27343 / NCTC 10154).